A 399-amino-acid polypeptide reads, in one-letter code: MSDSKEQRVQPLGLLEEDPTTSGIRLFPRDFQFQQTHGHKSSTGCLGHGPLVLQLLSFTLLAGFLVAILVQVYKGPSSLSQEQSEQDVIYQNLTQLKAAVGELSEKSKLQEIYQELTQLKAAVGELPEKSRLQEIYQELTRLKAAVGELPENSRLQEIYQELTQLKAAVGELPEKSKQQEIYQELTRLKAAVGELPEKSKQQEIYQELTRLKAAVGELPEKSKQQEIYQELTRLKAAVGELPDQSKQQQIYQELTDLKTAFERLCCRCPKDWTFFQGNCYFISNSQRNWHDSVTACQEVGAQLVVIKSAEEQNFLQLQSSRSNRFTWMGLSDLNQEGTWQWVDGSPLSSSFQRYWNSGEPNNSGDEDCAEFSGSGWNDNRCNVDNYWICKKPTACFRDE.

Topologically, residues 1-49 (MSDSKEQRVQPLGLLEEDPTTSGIRLFPRDFQFQQTHGHKSSTGCLGHG) are cytoplasmic. The Endocytosis signal motif lies at 14–15 (LL). A helical; Signal-anchor for type II membrane protein transmembrane segment spans residues 50–70 (PLVLQLLSFTLLAGFLVAILV). The Extracellular segment spans residues 71–399 (QVYKGPSSLS…KKPTACFRDE (329 aa)). Residue asparagine 92 is glycosylated (N-linked (GlcNAc...) asparagine). Tandem repeats lie at residues 108-130 (KLQE…PEKS), 131-153 (RLQE…PENS), 154-176 (RLQE…PEKS), 177-199 (KQQE…PEKS), 200-222 (KQQE…PEKS), 223-245 (KQQE…PDQS), and 246-268 (KQQQ…CCRC). The interval 108–269 (KLQEIYQELT…AFERLCCRCP (162 aa)) is 7 X approximate tandem repeats. 4 disulfides stabilise this stretch: cysteine 265/cysteine 395, cysteine 268/cysteine 279, cysteine 296/cysteine 389, and cysteine 368/cysteine 381. The region spanning 274 to 390 (FFQGNCYFIS…CNVDNYWICK (117 aa)) is the C-type lectin domain. The Ca(2+) site is built by glutamate 359, asparagine 361, serine 363, glutamate 366, asparagine 377, and aspartate 378. Asparagine 361 carries an N-linked (GlcNAc...) asparagine glycan.

In terms of assembly, homotetramer.

The protein resides in the membrane. Functionally, probable pathogen-recognition receptor involved in peripheral immune surveillance in liver. May mediate the endocytosis of pathogens which are subsequently degraded in lysosomal compartments. Probably recognizes in a calcium-dependent manner high mannose N-linked oligosaccharides in a variety of pathogen antigens. Is a receptor for ICAM3, probably by binding to mannose-like carbohydrates. This Nomascus concolor (Black crested gibbon) protein is C-type lectin domain family 4 member M (CLEC4M).